Consider the following 197-residue polypeptide: RILP-like protein 2 (197 aa).

Residues 1–24 are disordered; it reads MEDHPVREEEDGEEDEGALAKSPL. The segment covering 8 to 17 has biased composition (acidic residues); sequence EEEDGEEDEG. An RH1 domain is found at 14-96; the sequence is EDEGALAKSP…KQEVEGLRKA (83 aa). Positions 69 to 153 form a coiled coil; that stretch reads VNEGSLAVEE…VQEELQCYRS (85 aa). In terms of domain architecture, RH2 spans 119–184; the sequence is RPRFTLQELR…GNGEKEERTI (66 aa).

Belongs to the RILPL family. As to quaternary structure, homodimer. Interacts with RAC1. Interacts (via N-terminus) with MYO5A, the interaction is required for its role in dendrite formation. Interacts with RAB8A; interaction is dependent on the phosphorylation of RAB8A on 'Thr-72'. Interacts with RAB10 and RAB12; interaction is dependent on the phosphorylation of 'Thr-73' on RAB10 and 'Ser-105' on RAB12.

It localises to the cytoplasm. The protein localises to the cytosol. Its subcellular location is the cytoskeleton. It is found in the microtubule organizing center. The protein resides in the centrosome. It localises to the cell projection. The protein localises to the cilium. In terms of biological role, involved in cell shape and neuronal morphogenesis, positively regulating the establishment and maintenance of dendritic spines. Plays a role in cellular protein transport, including protein transport away from primary cilia. May function via activation of RAC1 and PAK1. This chain is RILP-like protein 2 (Rilpl2), found in Mus musculus (Mouse).